Here is a 144-residue protein sequence, read N- to C-terminus: Large ribosomal subunit protein uL15 (144 aa).

The tract at residues 1–53 (MRLNTLSPAQGAKQAPKRVGRGIGSGLGKTGGRGHKGQNSRTGGGVRRGFEGG) is disordered. A compositionally biased stretch (gly residues) spans 21–31 (RGIGSGLGKTG).

This sequence belongs to the universal ribosomal protein uL15 family. Part of the 50S ribosomal subunit.

Its function is as follows. Binds to the 23S rRNA. The chain is Large ribosomal subunit protein uL15 from Hamiltonella defensa subsp. Acyrthosiphon pisum (strain 5AT).